Consider the following 96-residue polypeptide: UPF0358 protein Aflv_1873 (96 aa).

It belongs to the UPF0358 family.

The protein is UPF0358 protein Aflv_1873 of Anoxybacillus flavithermus (strain DSM 21510 / WK1).